The chain runs to 284 residues: HTH-type transcriptional activator RhaR (284 aa).

The region spanning Asp-181–Arg-279 is the HTH araC/xylS-type domain. 2 DNA-binding regions (H-T-H motif) span residues Glu-198–Thr-219 and Ile-246–Phe-269.

As to quaternary structure, binds DNA as a dimer.

Its subcellular location is the cytoplasm. Its function is as follows. Activates expression of the rhaSR operon in response to L-rhamnose. The chain is HTH-type transcriptional activator RhaR from Pectobacterium atrosepticum (strain SCRI 1043 / ATCC BAA-672) (Erwinia carotovora subsp. atroseptica).